A 201-amino-acid polypeptide reads, in one-letter code: Recombination protein RecR (201 aa).

A C4-type zinc finger spans residues 60 to 75 (CSVCGNVDTIDPCSIC). Positions 83 to 178 (ATIIVVEDIA…KVTRLAHGVP (96 aa)) constitute a Toprim domain.

It belongs to the RecR family.

In terms of biological role, may play a role in DNA repair. It seems to be involved in an RecBC-independent recombinational process of DNA repair. It may act with RecF and RecO. The polypeptide is Recombination protein RecR (Bartonella henselae (strain ATCC 49882 / DSM 28221 / CCUG 30454 / Houston 1) (Rochalimaea henselae)).